Here is a 564-residue protein sequence, read N- to C-terminus: Ribulokinase (564 aa).

It belongs to the ribulokinase family.

The catalysed reaction is D-ribulose + ATP = D-ribulose 5-phosphate + ADP + H(+). It catalyses the reaction L-ribulose + ATP = L-ribulose 5-phosphate + ADP + H(+). Its pathway is carbohydrate degradation; L-arabinose degradation via L-ribulose; D-xylulose 5-phosphate from L-arabinose (bacterial route): step 2/3. The chain is Ribulokinase from Geobacillus thermodenitrificans (strain NG80-2).